Reading from the N-terminus, the 114-residue chain is T cell receptor beta variable 5-5 (114 aa).

Positions 1 to 21 (MGPGLLCWVLLCLLGAGPVDA) are cleaved as a signal peptide. An Ig-like domain is found at 22–114 (GVTQSPTHLI…SALYLCASSL (93 aa)). Residues cysteine 42 and cysteine 110 are joined by a disulfide bond. N-linked (GlcNAc...) asparagine glycosylation is present at asparagine 90.

Alpha-beta TR is a heterodimer composed of an alpha and beta chain; disulfide-linked. The alpha-beta TR is associated with the transmembrane signaling CD3 coreceptor proteins to form the TR-CD3 (TcR or TCR). The assembly of alpha-beta TR heterodimers with CD3 occurs in the endoplasmic reticulum where a single alpha-beta TR heterodimer associates with one CD3D-CD3E heterodimer, one CD3G-CD3E heterodimer and one CD247 homodimer forming a stable octameric structure. CD3D-CD3E and CD3G-CD3E heterodimers preferentially associate with TR alpha and TR beta chains, respectively. The association of the CD247 homodimer is the last step of TcR assembly in the endoplasmic reticulum and is required for transport to the cell surface.

It localises to the cell membrane. Functionally, v region of the variable domain of T cell receptor (TR) beta chain that participates in the antigen recognition. Alpha-beta T cell receptors are antigen specific receptors which are essential to the immune response and are present on the cell surface of T lymphocytes. Recognize peptide-major histocompatibility (MH) (pMH) complexes that are displayed by antigen presenting cells (APC), a prerequisite for efficient T cell adaptive immunity against pathogens. Binding of alpha-beta TR to pMH complex initiates TR-CD3 clustering on the cell surface and intracellular activation of LCK that phosphorylates the ITAM motifs of CD3G, CD3D, CD3E and CD247 enabling the recruitment of ZAP70. In turn ZAP70 phosphorylates LAT, which recruits numerous signaling molecules to form the LAT signalosome. The LAT signalosome propagates signal branching to three major signaling pathways, the calcium, the mitogen-activated protein kinase (MAPK) kinase and the nuclear factor NF-kappa-B (NF-kB) pathways, leading to the mobilization of transcription factors that are critical for gene expression and essential for T cell growth and differentiation. The T cell repertoire is generated in the thymus, by V-(D)-J rearrangement. This repertoire is then shaped by intrathymic selection events to generate a peripheral T cell pool of self-MH restricted, non-autoaggressive T cells. Post-thymic interaction of alpha-beta TR with the pMH complexes shapes TR structural and functional avidity. This is T cell receptor beta variable 5-5 from Homo sapiens (Human).